We begin with the raw amino-acid sequence, 739 residues long: Nucleoprotein (739 aa).

An oligomerization, N-terminal arm region spans residues 1–25; the sequence is MDSRPQKIWMAPSLTESDMDYHKIL. Residues 26-405 form an NP core region; it reads TAGLSVQQGI…TLRKERLAKL (380 aa). Residues 415–647 form a disordered region; it reads PKTSGHYDDD…DSDNTQSEHS (233 aa). 2 stretches are compositionally biased toward low complexity: residues 449–458 and 504–514; these read SQDTTIPDVV and KGGQQKNSQKG. Residues 562–567 carry the Host PPP2R5C-binding motif motif; the sequence is LTPINE. The segment covering 567 to 579 has biased composition (acidic residues); the sequence is EEADPLDDADDET. Positions 606–611 match the VP30-binding motif motif; that stretch reads PPAPVY. Residues 611–638 show a composition bias toward basic and acidic residues; sequence YRDHSEKKELPQDEQQDQDHTQEARNQD.

The protein belongs to the filoviruses nucleoprotein family. In terms of assembly, homooligomer. Homomultimerizes to form the nucleocapsid. Binds to viral genomic RNA. Interacts with VP35 and VP30 to form the nucleocapsid. Interacts with host PPP2R5C; this interaction leads to VP30 dephosphorylation and viral transcription. Interacts with VP24; this interaction facilitates nucleocapsid assembly and genome packaging. Interacts with matrix protein VP40; this interaction allows recruitment of the nucleocapsid into progeny virions. Interacts with host STAU1. Interacts with host NXF1 (via RNA-binding domain); this interaction recruits NXF1 to the inclusion bodies were viral replication takes place, probably to export viral mRNA-NXF1 complexes from these sites. Interacts with host CCDC92; this interaction sequesters NP in the host cytoplasm. Interacts with host TRIM14. Phosphorylated by host. Post-translationally, O-glycosylated by host. In terms of processing, acetylated by host EP300 in vitro.

It localises to the virion. The protein resides in the host cytoplasm. Its function is as follows. Oligomerizes into helical capsid to encapsidate the viral genome, protecting it from nucleases and the cellular innate immune response. VP35 binds to and stabilizes monomeric NP, keeping it soluble. Upon virus replication, NP is recruited to bind cooperatively viral genomic RNA and VP35 is released. The encapsidated genomic RNA is termed the nucleocapsid and serves as template for transcription and replication. The nucleocapsid is helical with a pitch of 10.81 NP per turn and a diameter of about 22nm. Each NP binds to six nucleotides of viral genomic RNA, three being exposed to the solvant and three hidden into the nucleocapsid. Also recruits host PPP2R5C phosphatase to dephosphorylate VP30 and thereby promote viral transcription. Upon virion assembly and budding, NP binds to VP24 and possibly host STAU1. In Epomops franqueti (Franquet's epauletted fruit bat), this protein is Nucleoprotein (NP).